The primary structure comprises 515 residues: Chromosomal replication initiator protein DnaA (515 aa).

The domain I, interacts with DnaA modulators stretch occupies residues 1 to 89 (MVADQAVLSS…LLAISIDANL (89 aa)). Residues 89–172 (LQPPRTPSSE…APPSTSAETS (84 aa)) form a domain II region. Disordered stretches follow at residues 90 to 130 (QPPR…SRRA) and 142 to 171 (PPAD…SAET). 2 stretches are compositionally biased toward low complexity: residues 102–114 (SSLA…AAAP) and 143–160 (PADV…NGKP). The segment at 173-389 (RLNDRYHFET…GALIRVTAFA (217 aa)) is domain III, AAA+ region. The ATP site is built by Gly217, Gly219, Lys220, and Thr221. Positions 390–515 (SLNRQTVDIE…NEIKRKQRGA (126 aa)) are domain IV, binds dsDNA.

It belongs to the DnaA family. In terms of assembly, oligomerizes as a right-handed, spiral filament on DNA at oriC.

It localises to the cytoplasm. In terms of biological role, plays an essential role in the initiation and regulation of chromosomal replication. ATP-DnaA binds to the origin of replication (oriC) to initiate formation of the DNA replication initiation complex once per cell cycle. Binds the DnaA box (a 9 base pair repeat at the origin) and separates the double-stranded (ds)DNA. Forms a right-handed helical filament on oriC DNA; dsDNA binds to the exterior of the filament while single-stranded (ss)DNA is stabiized in the filament's interior. The ATP-DnaA-oriC complex binds and stabilizes one strand of the AT-rich DNA unwinding element (DUE), permitting loading of DNA polymerase. After initiation quickly degrades to an ADP-DnaA complex that is not apt for DNA replication. Binds acidic phospholipids. This Micrococcus luteus (strain ATCC 4698 / DSM 20030 / JCM 1464 / CCM 169 / CCUG 5858 / IAM 1056 / NBRC 3333 / NCIMB 9278 / NCTC 2665 / VKM Ac-2230) (Micrococcus lysodeikticus) protein is Chromosomal replication initiator protein DnaA.